The chain runs to 648 residues: Threonine--tRNA ligase (648 aa).

Residues 1–61 (MINITFPDGA…TEDGSIEIVT (61 aa)) enclose the TGS domain. Residues 242–540 (DHRKLGKELD…LIENYKGAFP (299 aa)) form a catalytic region. Zn(2+) is bound by residues C336, H387, and H517.

This sequence belongs to the class-II aminoacyl-tRNA synthetase family. As to quaternary structure, homodimer. Zn(2+) is required as a cofactor.

The protein resides in the cytoplasm. It carries out the reaction tRNA(Thr) + L-threonine + ATP = L-threonyl-tRNA(Thr) + AMP + diphosphate + H(+). Functionally, catalyzes the attachment of threonine to tRNA(Thr) in a two-step reaction: L-threonine is first activated by ATP to form Thr-AMP and then transferred to the acceptor end of tRNA(Thr). Also edits incorrectly charged L-seryl-tRNA(Thr). The polypeptide is Threonine--tRNA ligase (Streptococcus thermophilus (strain ATCC BAA-250 / LMG 18311)).